The primary structure comprises 506 residues: Probable Xaa-Pro aminopeptidase BDCG_04966 (506 aa).

Residues aspartate 285, aspartate 296, glutamate 433, and glutamate 471 each coordinate Mn(2+).

This sequence belongs to the peptidase M24B family. It depends on Mn(2+) as a cofactor.

It catalyses the reaction Release of any N-terminal amino acid, including proline, that is linked to proline, even from a dipeptide or tripeptide.. In terms of biological role, catalyzes the removal of a penultimate prolyl residue from the N-termini of peptides. The protein is Probable Xaa-Pro aminopeptidase BDCG_04966 of Ajellomyces dermatitidis (strain ER-3 / ATCC MYA-2586) (Blastomyces dermatitidis).